The following is a 194-amino-acid chain: Pyridoxine/pyridoxamine 5'-phosphate oxidase (194 aa).

FMN-binding positions include 42-47 (RVVLLK), 57-58 (FT), R63, K64, and Q86. Residue K47 coordinates substrate. The substrate site is built by Y104, R108, and S112. Residues 121-122 (QS) and W166 contribute to the FMN site. 172–174 (RIH) contacts substrate. FMN is bound at residue R176.

The protein belongs to the pyridoxamine 5'-phosphate oxidase family. In terms of assembly, homodimer. The cofactor is FMN.

The enzyme catalyses pyridoxamine 5'-phosphate + O2 + H2O = pyridoxal 5'-phosphate + H2O2 + NH4(+). It catalyses the reaction pyridoxine 5'-phosphate + O2 = pyridoxal 5'-phosphate + H2O2. It functions in the pathway cofactor metabolism; pyridoxal 5'-phosphate salvage; pyridoxal 5'-phosphate from pyridoxamine 5'-phosphate: step 1/1. The protein operates within cofactor metabolism; pyridoxal 5'-phosphate salvage; pyridoxal 5'-phosphate from pyridoxine 5'-phosphate: step 1/1. Functionally, catalyzes the oxidation of either pyridoxine 5'-phosphate (PNP) or pyridoxamine 5'-phosphate (PMP) into pyridoxal 5'-phosphate (PLP). This chain is Pyridoxine/pyridoxamine 5'-phosphate oxidase, found in Ehrlichia ruminantium (strain Welgevonden).